A 434-amino-acid polypeptide reads, in one-letter code: Tryptophan synthase beta chain (434 aa).

Position 92 is an N6-(pyridoxal phosphate)lysine (Lys92). Positions 411–434 are disordered; the sequence is VKGGVATSPESFDASGAKGAGSQS.

This sequence belongs to the TrpB family. In terms of assembly, tetramer of two alpha and two beta chains. Pyridoxal 5'-phosphate is required as a cofactor.

It catalyses the reaction (1S,2R)-1-C-(indol-3-yl)glycerol 3-phosphate + L-serine = D-glyceraldehyde 3-phosphate + L-tryptophan + H2O. Its pathway is amino-acid biosynthesis; L-tryptophan biosynthesis; L-tryptophan from chorismate: step 5/5. The beta subunit is responsible for the synthesis of L-tryptophan from indole and L-serine. The chain is Tryptophan synthase beta chain from Polaromonas naphthalenivorans (strain CJ2).